The following is a 428-amino-acid chain: MRVVILGSGVVGVASAYYLARAGHEVTVIDREAGPALETSFANAGQISPGYAAPWAAPGVPLKAVKWMFEKHAPLAIRLDGTRFQLQWMWQMLRNCTPERYAVNKSRMVRLAEYSRDCLQALRADTGIQYEGRTGGTLQLFRTQQQLDGAAKDIAVLREANVPFELLSPAELKNAEPALAAVSHKLTGGLRLPGDETGDCQLFTTRLAALAESLGVKFRYNTPIDGLAIAGGKIAGVQCGSETVRADAYVVALGSYSTNFVANLMKIPVYPLKGYSITAPIVDEAAAPVSTVLDETYKIAITRFDQRIRVGGMAEIVGFDKTLRAARRETLEMCVNDLFPGGGDTSKATFWTGLRPMTPDGTPIVGRTPVSNLFLNTGHGTLGWTMSCGSGQLLADLISGKKPAIQADDLSVHRYLKEVAGQTRPAYA.

An FAD-binding site is contributed by 3–17 (VVILGSGVVGVASAY).

Belongs to the DadA oxidoreductase family. Requires FAD as cofactor.

The enzyme catalyses a D-alpha-amino acid + A + H2O = a 2-oxocarboxylate + AH2 + NH4(+). Its pathway is amino-acid degradation; D-alanine degradation; NH(3) and pyruvate from D-alanine: step 1/1. In terms of biological role, oxidative deamination of D-amino acids. This chain is D-amino acid dehydrogenase, found in Burkholderia multivorans (strain ATCC 17616 / 249).